The primary structure comprises 295 residues: 4-hydroxy-tetrahydrodipicolinate synthase (295 aa).

A pyruvate-binding site is contributed by threonine 47. The Proton donor/acceptor role is filled by tyrosine 135. Lysine 163 serves as the catalytic Schiff-base intermediate with substrate. Isoleucine 206 is a pyruvate binding site.

This sequence belongs to the DapA family. As to quaternary structure, homodimer.

The protein localises to the cytoplasm. It catalyses the reaction L-aspartate 4-semialdehyde + pyruvate = (2S,4S)-4-hydroxy-2,3,4,5-tetrahydrodipicolinate + H2O + H(+). Its pathway is amino-acid biosynthesis; L-lysine biosynthesis via DAP pathway; (S)-tetrahydrodipicolinate from L-aspartate: step 3/4. Its function is as follows. Catalyzes the condensation of (S)-aspartate-beta-semialdehyde [(S)-ASA] and pyruvate to 4-hydroxy-tetrahydrodipicolinate (HTPA). This chain is 4-hydroxy-tetrahydrodipicolinate synthase, found in Staphylococcus saprophyticus subsp. saprophyticus (strain ATCC 15305 / DSM 20229 / NCIMB 8711 / NCTC 7292 / S-41).